Reading from the N-terminus, the 92-residue chain is Small ribosomal subunit protein uS19 (92 aa).

Belongs to the universal ribosomal protein uS19 family.

In terms of biological role, protein S19 forms a complex with S13 that binds strongly to the 16S ribosomal RNA. The chain is Small ribosomal subunit protein uS19 from Nitrobacter hamburgensis (strain DSM 10229 / NCIMB 13809 / X14).